The primary structure comprises 397 residues: DnaJ protein homolog 1 (397 aa).

The J domain maps to 1 to 52 (KNASPDDLKKAYRKAAIKNHPDKGGDPEKFKELAQAYDVLSDPEKREIYDQY). A CR-type zinc finger spans residues 114 to 198 (GTSKKLSLSR…CKGEKVVQEK (85 aa)). CXXCXGXG motif repeat units lie at residues 127–134 (CSKCNGKG), 143–150 (CASCQGSG), 170–177 (CNDCKGTG), and 186–193 (CPLCKGEK). The interval 367 to 397 (MRRKQHQHAQEAYDEDDEGHGGGQRVQCAQQ) is disordered. Cysteine 394 bears the Cysteine methyl ester mark. Residue cysteine 394 is the site of S-farnesyl cysteine attachment. Positions 395–397 (AQQ) are cleaved as a propeptide — removed in mature form.

It localises to the membrane. In terms of biological role, plays a continuous role in plant development probably in the structural organization of compartments. The sequence is that of DnaJ protein homolog 1 (DNAJ1) from Allium porrum (Leek).